A 146-amino-acid chain; its full sequence is Microsomal glutathione S-transferase 2 (146 aa).

A run of 3 helical transmembrane segments spans residues 6-26 (ILLAALSVLSACQQSYFAMQV), 59-79 (FYPIFIITLWMAGWYFNQVFA), and 111-131 (SLGVLALLTVLGAVGILNSFL).

The protein belongs to the MAPEG family. As to quaternary structure, homotrimer.

It localises to the endoplasmic reticulum membrane. Its subcellular location is the microsome membrane. The catalysed reaction is RX + glutathione = an S-substituted glutathione + a halide anion + H(+). It catalyses the reaction 1-chloro-2,4-dinitrobenzene + glutathione = 2,4-dinitrophenyl-S-glutathione + chloride + H(+). It carries out the reaction leukotriene C4 = leukotriene A4 + glutathione. The enzyme catalyses (5S)-hydroperoxy-(6E,8Z,11Z,14Z)-eicosatetraenoate + 2 glutathione = (5S)-hydroxy-(6E,8Z,11Z,14Z)-eicosatetraenoate + glutathione disulfide + H2O. With respect to regulation, each monomer binds on GSH molecule but only one subunit is catalytically active. Functionally, catalyzes several different glutathione-dependent reactions. Catalyzes the glutathione-dependent reduction of lipid hydroperoxides, such as 5-HPETE. Has glutathione transferase activity, toward xenobiotic electrophiles, such as 1-chloro-2, 4-dinitrobenzene (CDNB). Also catalyzes the conjugation of leukotriene A4 with reduced glutathione to form leukotriene C4 (LTC4). Involved in oxidative DNA damage induced by ER stress and anticancer agents by activating LTC4 biosynthetic machinery in nonimmune cells. The polypeptide is Microsomal glutathione S-transferase 2 (MGST2) (Bos taurus (Bovine)).